The sequence spans 655 residues: SRSF protein kinase 1 (655 aa).

The segment at 1–57 (MERKVLALQARKKRTKAKKDKAQRKSETQHRGSAPHSESDLPEQEEEILGSDDDEQE) is disordered. Basic residues predominate over residues 10–22 (ARKKRTKAKKDKA). Residues 40–57 (DLPEQEEEILGSDDDEQE) show a composition bias toward acidic residues. Ser-51 carries the post-translational modification Phosphoserine; by CK2. One can recognise a Protein kinase domain in the interval 80-653 (YHVIRKLGWG…AAECLRHPWL (574 aa)). Residues 86-94 (LGWGHFSTV), Lys-109, and 166-168 (EVL) each bind ATP. The active-site Proton acceptor is Asp-213. 2 disordered regions span residues 238-341 (WQRS…QDQT) and 397-417 (FLSS…CTPI). Residues 265-276 (KNKKKKLKKKQK) show a composition bias toward basic residues. Composition is skewed to basic and acidic residues over residues 277 to 288 (RQAELLEKRMQE) and 304 to 318 (NKQE…RPLK). Residues Ser-309, Ser-311, and Ser-333 each carry the phosphoserine modification. Ser-555 is subject to Phosphoserine; by CK2.

Belongs to the protein kinase superfamily. CMGC Ser/Thr protein kinase family. In terms of assembly, monomer. Isoform 2 is found in a multisubunit complex containing seven proteins, named toposome, which separates entangled circular chromatin DNA during chromosome segregation. Isoform 2 interacts with DNAJC8 and AHSA1/AHA1 and this mediates formation of a complex with the Hsp70 /Hsp90 machinery. Isoform 1 is found in a complex with: DHX9, MOV10, MATR3, HNRNPU, NCL, DDX21, HSD17B4, PABPC1, HNRNPM, IGF2BP1, SYNCRIP, RPL3, VIM, YBX1, NPM1, HNRNPA2B1, HNRNPC, RPLP0, RPL7A and RALY. Isoform 2 binds to IGF2BP1, SYNCRIP, HNRNPA2B1 and HNRNPC. Isoform 1 and isoform 2 interact with SAFB which inhibits its activity. Isoform 2 interacts with SAFB2 which inhibits its activity. As to quaternary structure, (Microbial infection) Isoform 2 interacts with HHV-1 ICP27 protein. Requires Mg(2+) as cofactor. As to expression, isoform 2 is predominantly expressed in the testis but is also present at lower levels in heart, ovary, small intestine, liver, kidney, pancreas and skeletal muscle. Isoform 1 is only seen in the testis, at lower levels than isoform 2. Highly expressed in different erythroid and lymphoid cell lines, with isoform 2 being far more abundant than isoform 1.

It is found in the cytoplasm. It localises to the nucleus. The protein localises to the nucleus matrix. Its subcellular location is the microsome. The protein resides in the nucleoplasm. It is found in the nucleus speckle. It localises to the chromosome. It carries out the reaction L-seryl-[protein] + ATP = O-phospho-L-seryl-[protein] + ADP + H(+). The catalysed reaction is L-threonyl-[protein] + ATP = O-phospho-L-threonyl-[protein] + ADP + H(+). With respect to regulation, activated by phosphorylation on Ser-51 and Ser-555. Serine/arginine-rich protein-specific kinase which specifically phosphorylates its substrates at serine residues located in regions rich in arginine/serine dipeptides, known as RS domains and is involved in the phosphorylation of SR splicing factors and the regulation of splicing. Plays a central role in the regulatory network for splicing, controlling the intranuclear distribution of splicing factors in interphase cells and the reorganization of nuclear speckles during mitosis. Can influence additional steps of mRNA maturation, as well as other cellular activities, such as chromatin reorganization in somatic and sperm cells and cell cycle progression. Isoform 2 phosphorylates SFRS2, ZRSR2, LBR and PRM1. Isoform 2 phosphorylates SRSF1 using a directional (C-terminal to N-terminal) and a dual-track mechanism incorporating both processive phosphorylation (in which the kinase stays attached to the substrate after each round of phosphorylation) and distributive phosphorylation steps (in which the kinase and substrate dissociate after each phosphorylation event). The RS domain of SRSF1 binds first to a docking groove in the large lobe of the kinase domain of SRPK1. This induces certain structural changes in SRPK1 and/or RRM2 domain of SRSF1, allowing RRM2 to bind the kinase and initiate phosphorylation. The cycles continue for several phosphorylation steps in a processive manner (steps 1-8) until the last few phosphorylation steps (approximately steps 9-12). During that time, a mechanical stress induces the unfolding of the beta-4 motif in RRM2, which then docks at the docking groove of SRPK1. This also signals RRM2 to begin to dissociate, which facilitates SRSF1 dissociation after phosphorylation is completed. Isoform 2 can mediate hepatitis B virus (HBV) core protein phosphorylation. It plays a negative role in the regulation of HBV replication through a mechanism not involving the phosphorylation of the core protein but by reducing the packaging efficiency of the pregenomic RNA (pgRNA) without affecting the formation of the viral core particles. Isoform 1 and isoform 2 can induce splicing of exon 10 in MAPT/TAU. The ratio of isoform 1/isoform 2 plays a decisive role in determining cell fate in K-562 leukaemic cell line: isoform 2 favors proliferation where as isoform 1 favors differentiation. This chain is SRSF protein kinase 1, found in Homo sapiens (Human).